A 225-amino-acid polypeptide reads, in one-letter code: C-reactive protein (225 aa).

A signal peptide spans 1-18 (MLVVFLCLLSVTLEATEG). Residues 23–225 (SGKVLQFKTA…TGNVLVATDN (203 aa)) enclose the Pentraxin (PTX) domain. A disulfide bond links C54 and C116. 5 residues coordinate Ca(2+): D78, D157, P158, D159, and Q169.

It belongs to the pentraxin family. As to quaternary structure, homotrimer. Ca(2+) is required as a cofactor.

The protein resides in the secreted. Its function is as follows. Displays several functions associated with host defense: it promotes agglutination, bacterial capsular swelling, phagocytosis, and complement fixation through its calcium-dependent binding to phosphorylcholine. This is C-reactive protein from Danio rerio (Zebrafish).